Here is a 178-residue protein sequence, read N- to C-terminus: Large ribosomal subunit protein uL6 (178 aa).

This sequence belongs to the universal ribosomal protein uL6 family. As to quaternary structure, part of the 50S ribosomal subunit.

In terms of biological role, this protein binds to the 23S rRNA, and is important in its secondary structure. It is located near the subunit interface in the base of the L7/L12 stalk, and near the tRNA binding site of the peptidyltransferase center. The sequence is that of Large ribosomal subunit protein uL6 from Lactococcus lactis subsp. cremoris (strain SK11).